Reading from the N-terminus, the 584-residue chain is Segmentation polarity homeobox protein engrailed (584 aa).

Disordered regions lie at residues 1 to 27 (MALEDRCSPQSAPSPPGCLPHSPPQQH), 141 to 198 (EESD…SKPS), 343 to 380 (IGQAQSTTPVTTPSSRPSQLASPPPASNASTISSSSST), 392 to 451 (CSSA…GGKN), and 465 to 492 (DRPSSGPRYRRPKQPKDKTNDEKRPRTA). The span at 12–23 (APSPPGCLPHSP) shows a compositional bias: pro residues. A compositionally biased stretch (acidic residues) spans 160–174 (TEEDEEEDDDIDVDD). Over residues 189–198 (HQQSKQSKPS) the composition is skewed to polar residues. 2 stretches are compositionally biased toward low complexity: residues 348–380 (STTPVTTPSSRPSQLASPPPASNASTISSSSST) and 392–405 (CSSAASSLNSSPSS). The span at 478 to 489 (QPKDKTNDEKRP) shows a compositional bias: basic and acidic residues. The segment at residues 486 to 545 (EKRPRTAFSSEQLARLKREFNENRYLTERRRQQLSSELGLNEAQIKIWFQNKRAKIKKST) is a DNA-binding region (homeobox).

It belongs to the engrailed homeobox family.

The protein resides in the nucleus. In terms of biological role, this protein specifies the body segmentation pattern. It is required for the development of the central nervous system. Transcriptional regulator that repress activated promoters. The polypeptide is Segmentation polarity homeobox protein engrailed (en) (Drosophila virilis (Fruit fly)).